Reading from the N-terminus, the 704-residue chain is Ribosomal RNA large subunit methyltransferase K/L (704 aa).

Positions Thr43–Leu154 constitute a THUMP domain.

It belongs to the methyltransferase superfamily. RlmKL family.

It is found in the cytoplasm. It catalyses the reaction guanosine(2445) in 23S rRNA + S-adenosyl-L-methionine = N(2)-methylguanosine(2445) in 23S rRNA + S-adenosyl-L-homocysteine + H(+). It carries out the reaction guanosine(2069) in 23S rRNA + S-adenosyl-L-methionine = N(2)-methylguanosine(2069) in 23S rRNA + S-adenosyl-L-homocysteine + H(+). Its function is as follows. Specifically methylates the guanine in position 2445 (m2G2445) and the guanine in position 2069 (m7G2069) of 23S rRNA. This Proteus mirabilis (strain HI4320) protein is Ribosomal RNA large subunit methyltransferase K/L.